We begin with the raw amino-acid sequence, 113 residues long: Retrotransposon Gag-like protein 8 (113 aa).

This sequence belongs to the FAM127 family.

In Bos taurus (Bovine), this protein is Retrotransposon Gag-like protein 8 (RTL8A).